The sequence spans 393 residues: S-adenosylmethionine synthase 2 (393 aa).

Residue glutamate 9 participates in Mg(2+) binding. ATP is bound at residue histidine 15. Glutamate 43 is a K(+) binding site. Glutamate 56 and glutamine 99 together coordinate L-methionine. Residues 167–169, 235–238, aspartate 246, 252–253, alanine 269, lysine 273, and lysine 277 contribute to the ATP site; these read DGK, SGRF, and RK. Aspartate 246 contacts L-methionine. Residue lysine 277 coordinates L-methionine.

The protein belongs to the AdoMet synthase family. In terms of assembly, homotetramer. The cofactor is Mn(2+). It depends on Mg(2+) as a cofactor. Co(2+) serves as cofactor. Requires K(+) as cofactor.

Its subcellular location is the cytoplasm. The catalysed reaction is L-methionine + ATP + H2O = S-adenosyl-L-methionine + phosphate + diphosphate. It functions in the pathway amino-acid biosynthesis; S-adenosyl-L-methionine biosynthesis; S-adenosyl-L-methionine from L-methionine: step 1/1. Catalyzes the formation of S-adenosylmethionine from methionine and ATP. The reaction comprises two steps that are both catalyzed by the same enzyme: formation of S-adenosylmethionine (AdoMet) and triphosphate, and subsequent hydrolysis of the triphosphate. This is S-adenosylmethionine synthase 2 (SAMS2) from Elaeagnus umbellata (Autumn olive).